Here is a 177-residue protein sequence, read N- to C-terminus: Phycoerythrin beta subunit (177 aa).

Residues Tyr18, Lys28, Asn35, and Asp39 each contribute to the (2R,3E)-phycocyanobilin site. Residues Cys50, Asp54, and Cys61 each contribute to the 15,16-dihydrobiliverdin site. (2R,3E)-phycocyanobilin-binding residues include Arg77, Cys82, Arg84, and Asp85. Residues Arg129, Gln148, and Lys149 each contribute to the 15,16-dihydrobiliverdin site. Residues Pro154, Gly156, and Cys158 each coordinate (2R,3E)-phycocyanobilin.

Belongs to the phycobiliprotein family. As to quaternary structure, heterotetramer of 2 identical alpha chains and 2 identical beta chains which form 2 alpha-beta heterodimers within the heterotetramer. The two alpha-beta heterodimers are rotated to an open configuration in contrast to the closed configuration found in other cryptophyte species due to the insertion of a single amino acid, 'Asp-65', in a conserved region of the alpha chain. In the open form, the central chromophores are not in physical contact but are separated by a water-filled channel. Post-translationally, contains three phycocyanobilin chromophores and one 15,16-dihydrobiliverdin chromophore with binding of the phycocyanobilin chromophores mediated by both the alpha and beta subunits.

It localises to the plastid. Its subcellular location is the chloroplast thylakoid membrane. Its function is as follows. Light-harvesting photosynthetic bile pigment-protein from the phycobiliprotein complex. In Hemiselmis virescens, this protein is Phycoerythrin beta subunit.